Reading from the N-terminus, the 147-residue chain is Neocarzinostatin (147 aa).

Residues 1–34 (MVPISIIRNRVAKVAVGSAAVLGLAVGFQTPAVA) form the signal peptide. Cystine bridges form between C71-C81 and C122-C127.

Belongs to the neocarzinostatin family.

Functionally, NCS has antibiotic activity (for Gram-positive bacteria) and antitumor activity (for certain mouse tumors). NCS binds non-covalently to a chromophore which is the cytotoxic and mutagenic component of the antibiotic. The chromophore binds to DNA as a weak intercalator and causes single- and double-strand breaks. This Streptomyces carzinostaticus protein is Neocarzinostatin (ncsA).